A 96-amino-acid polypeptide reads, in one-letter code: Defensin-like protein 151 (96 aa).

Residues 1 to 29 (MKKPSQLSATILTIFVILAIGVMVKETLG) form the signal peptide. Disulfide bonds link Cys-35–Cys-88, Cys-48–Cys-68, Cys-53–Cys-82, and Cys-57–Cys-84.

It belongs to the DEFL family.

It is found in the secreted. The polypeptide is Defensin-like protein 151 (LCR17) (Arabidopsis thaliana (Mouse-ear cress)).